The chain runs to 103 residues: V-type ATP synthase subunit F (103 aa).

It belongs to the V-ATPase F subunit family.

Its function is as follows. Produces ATP from ADP in the presence of a proton gradient across the membrane. The sequence is that of V-type ATP synthase subunit F from Clostridium botulinum (strain Alaska E43 / Type E3).